The primary structure comprises 166 residues: Interferon gamma (166 aa).

A signal peptide spans 1 to 23; that stretch reads MKYTSYFLALLLCVLLGFSGSYG. Residue Q24 is modified to Pyrrolidone carboxylic acid. 2 N-linked (GlcNAc...) asparagine glycosylation sites follow: N39 and N106.

This sequence belongs to the type II (or gamma) interferon family. As to quaternary structure, homodimer. Interacts with IFNGR1 (via extracellular domain); this interaction promotes IFNGR1 dimerization. Released primarily from activated T lymphocytes.

The protein resides in the secreted. In terms of biological role, type II interferon produced by immune cells such as T-cells and NK cells that plays crucial roles in antimicrobial, antiviral, and antitumor responses by activating effector immune cells and enhancing antigen presentation. Primarily signals through the JAK-STAT pathway after interaction with its receptor IFNGR1 to affect gene regulation. Upon IFNG binding, IFNGR1 intracellular domain opens out to allow association of downstream signaling components JAK2, JAK1 and STAT1, leading to STAT1 activation, nuclear translocation and transcription of IFNG-regulated genes. Many of the induced genes are transcription factors such as IRF1 that are able to further drive regulation of a next wave of transcription. Plays a role in class I antigen presentation pathway by inducing a replacement of catalytic proteasome subunits with immunoproteasome subunits. In turn, increases the quantity, quality, and repertoire of peptides for class I MHC loading. Increases the efficiency of peptide generation also by inducing the expression of activator PA28 that associates with the proteasome and alters its proteolytic cleavage preference. Up-regulates as well MHC II complexes on the cell surface by promoting expression of several key molecules such as cathepsins B/CTSB, H/CTSH, and L/CTSL. Participates in the regulation of hematopoietic stem cells during development and under homeostatic conditions by affecting their development, quiescence, and differentiation. This Bos indicus (Zebu) protein is Interferon gamma (IFNG).